The sequence spans 382 residues: Lipid-A-disaccharide synthase (382 aa).

It belongs to the LpxB family.

It carries out the reaction 2-N,3-O-bis[(3R)-3-hydroxytetradecanoyl]-alpha-D-glucosaminyl 1-phosphate + UDP-2-N,3-O-bis[(3R)-3-hydroxytetradecanoyl]-alpha-D-glucosamine = lipid A disaccharide (E. coli) + UDP + H(+). The enzyme catalyses a lipid X + a UDP-2-N,3-O-bis[(3R)-3-hydroxyacyl]-alpha-D-glucosamine = a lipid A disaccharide + UDP + H(+). Its pathway is glycolipid biosynthesis; lipid IV(A) biosynthesis; lipid IV(A) from (3R)-3-hydroxytetradecanoyl-[acyl-carrier-protein] and UDP-N-acetyl-alpha-D-glucosamine: step 5/6. Condensation of UDP-2,3-diacylglucosamine and 2,3-diacylglucosamine-1-phosphate to form lipid A disaccharide, a precursor of lipid A, a phosphorylated glycolipid that anchors the lipopolysaccharide to the outer membrane of the cell. The protein is Lipid-A-disaccharide synthase of Escherichia coli O157:H7.